Reading from the N-terminus, the 143-residue chain is Large ribosomal subunit protein uL13 (143 aa).

This sequence belongs to the universal ribosomal protein uL13 family. Part of the 50S ribosomal subunit.

This protein is one of the early assembly proteins of the 50S ribosomal subunit, although it is not seen to bind rRNA by itself. It is important during the early stages of 50S assembly. In Symbiobacterium thermophilum (strain DSM 24528 / JCM 14929 / IAM 14863 / T), this protein is Large ribosomal subunit protein uL13.